A 185-amino-acid chain; its full sequence is Photosystem I assembly protein Ycf4 (185 aa).

Helical transmembrane passes span 24–44 (YLIGGMLTIGGIGFILASISS) and 66–86 (IIMGAYGVIANLLNIYLWYLV).

This sequence belongs to the Ycf4 family.

It is found in the cellular thylakoid membrane. In terms of biological role, seems to be required for the assembly of the photosystem I complex. In Prochlorococcus marinus (strain MIT 9515), this protein is Photosystem I assembly protein Ycf4.